Consider the following 528-residue polypeptide: UDP-glucuronosyltransferase 1A9 (528 aa).

The signal sequence occupies residues 1-23 (MAPVAFPTSFFLCLLLASGLAQA). N69 carries an N-linked (GlcNAc...) asparagine glycan. N6-succinyllysine is present on K97. N290 and N428 each carry an N-linked (GlcNAc...) asparagine glycan. A helical membrane pass occupies residues 486-506 (VIGFLLAIVLTVVFIVFKCCA).

Belongs to the UDP-glycosyltransferase family. As to quaternary structure, homodimer. Homooligomer. Interacts with UGT1A1, UGT1A3, UGT1A4, UGT1A6, UGT1A7, UGT1A8 and UGT1A10 to form heterodimers. In terms of tissue distribution, highly expressed in liver and at lower levels in stomach and kidney.

Its subcellular location is the endoplasmic reticulum membrane. The catalysed reaction is glucuronate acceptor + UDP-alpha-D-glucuronate = acceptor beta-D-glucuronoside + UDP + H(+). It carries out the reaction 2-hydroxy-17beta-estradiol + UDP-alpha-D-glucuronate = 2-hydroxy-17beta-estradiol 3-O-(beta-D-glucuronate) + UDP + H(+). It catalyses the reaction 4-hydroxy-17beta-estradiol + UDP-alpha-D-glucuronate = 17beta-estradiol 4-O-(beta-D-glucuronate) + UDP + H(+). The enzyme catalyses 2-hydroxyestrone + UDP-alpha-D-glucuronate = 2-hydroxyestrone 3-O-(beta-D-glucuronate) + UDP + H(+). The catalysed reaction is 4-hydroxyestrone + UDP-alpha-D-glucuronate = estrone 4-O-(beta-D-glucuronate) + UDP + H(+). It carries out the reaction prunetin + UDP-alpha-D-glucuronate = prunetin-5-O-beta-D-glucuronide + UDP. It catalyses the reaction 8-iso-prostaglandin F2alpha + UDP-alpha-D-glucuronate = 8-iso-prostaglandin F2alpha-glucuronide + UDP + H(+). The enzyme catalyses 5-epi-5-F2t-IsoP + UDP-alpha-D-glucuronate = 5-epi-5-F2t-IsoP-glucuronide + UDP + H(+). The catalysed reaction is (5Z,8Z,11Z,14Z)-eicosatetraenoate + UDP-alpha-D-glucuronate = O-[(5Z),(8Z),(11Z),(14Z)-eicosatetraenoyl]-beta-D-glucuronate + UDP. It carries out the reaction 15-hydroxy-(5Z,8Z,11Z,13E)-eicosatetraenoate + UDP-alpha-D-glucuronate = 15-O-(beta-D-glucuronosyl)-(5Z,8Z,11Z,14Z)-eicosatetraenoate + UDP + H(+). It catalyses the reaction prostaglandin B1 + UDP-alpha-D-glucuronate = 15-O-(beta-D-glucuronosyl)-prostaglandin B1 + UDP + H(+). The enzyme catalyses (E)-ferulate + UDP-alpha-D-glucuronate = (E)-4-O-(beta-D-glucuronosyl)-ferulate + UDP + H(+). The catalysed reaction is (E)-ferulate + UDP-alpha-D-glucuronate = (E)-ferulic acid beta-D-glucuronate ester + UDP. It carries out the reaction candesartan + UDP-alpha-D-glucuronate = candesartan O-beta-D-glucuronoside + UDP. It catalyses the reaction SN-38 + UDP-alpha-D-glucuronate = SN-38 O-beta-D-glucuronide + UDP + H(+). The enzyme catalyses mycophenolate + UDP-alpha-D-glucuronate = mycophenolate 7-O-beta-D-glucuronide + UDP + H(+). In terms of biological role, UDP-glucuronosyltransferase (UGT) that catalyzes phase II biotransformation reactions in which lipophilic substrates are conjugated with glucuronic acid to increase the metabolite's water solubility, thereby facilitating excretion into either the urine or bile. Essential for the elimination and detoxification of drugs, xenobiotics and endogenous compounds. Catalyzes the glucuronidation of endogenous estrogen hormones such as estradiol and estrone. Involved in the glucuronidation of arachidonic acid (AA) and AA-derived eicosanoids including 15-HETE, PGB1 and F2-isoprostanes (8-iso-PGF2alpha and 5-epi-5-F2t-IsoP). Glucuronates the phytochemical ferulic acid efficently at both the phenolic or the carboxylic acid group. Also catalyzes the glucuronidation of the isoflavones genistein, daidzein, glycitein, formononetin, biochanin A and prunetin, which are phytoestrogens with anticancer and cardiovascular properties. Involved in the glucuronidation of the AGTR1 angiotensin receptor antagonist caderastan, a drug which can inhibit the effect of angiotensin II. Involved in the biotransformation of 7-ethyl-10-hydroxycamptothecin (SN-38), the pharmacologically active metabolite of the anticancer drug irinotecan. Also metabolizes mycophenolate, an immunosuppressive agent. This Mus musculus (Mouse) protein is UDP-glucuronosyltransferase 1A9.